A 131-amino-acid polypeptide reads, in one-letter code: Small ribosomal subunit protein uS11 (131 aa).

It belongs to the universal ribosomal protein uS11 family. Part of the 30S ribosomal subunit. Interacts with proteins S7 and S18. Binds to IF-3.

Functionally, located on the platform of the 30S subunit, it bridges several disparate RNA helices of the 16S rRNA. Forms part of the Shine-Dalgarno cleft in the 70S ribosome. This Dictyoglomus turgidum (strain DSM 6724 / Z-1310) protein is Small ribosomal subunit protein uS11.